Reading from the N-terminus, the 371-residue chain is Cytochrome b (371 aa).

The next 4 membrane-spanning stretches (helical) occupy residues 25-45 (FGSM…FLAV), 69-90 (WMMQ…YIHI), 105-125 (WMSG…GYVL), and 170-190 (FFAL…LHII). Heme b is bound by residues histidine 75 and histidine 89. Residues histidine 174 and histidine 188 each coordinate heme b. Histidine 193 provides a ligand contact to a ubiquinone. Transmembrane regions (helical) follow at residues 218-238 (HKDL…MSFF), 280-300 (LGGA…PFTH), 312-332 (LSQL…WAAT), and 339-358 (FIII…LSFP).

It belongs to the cytochrome b family. As to quaternary structure, the cytochrome bc1 complex contains 3 respiratory subunits (MT-CYB, CYC1 and UQCRFS1), 2 core proteins (UQCRC1 and UQCRC2) and probably 6 low-molecular weight proteins. The cofactor is heme b.

The protein localises to the mitochondrion inner membrane. Component of the ubiquinol-cytochrome c reductase complex (complex III or cytochrome b-c1 complex) that is part of the mitochondrial respiratory chain. The b-c1 complex mediates electron transfer from ubiquinol to cytochrome c. Contributes to the generation of a proton gradient across the mitochondrial membrane that is then used for ATP synthesis. The protein is Cytochrome b (MT-CYB) of Apodora papuana (Papuan olive python).